We begin with the raw amino-acid sequence, 72 residues long: NAD(P)H-quinone oxidoreductase subunit O (72 aa).

This sequence belongs to the complex I NdhO subunit family. As to quaternary structure, NDH-1 can be composed of about 15 different subunits; different subcomplexes with different compositions have been identified which probably have different functions.

The protein localises to the cellular thylakoid membrane. It carries out the reaction a plastoquinone + NADH + (n+1) H(+)(in) = a plastoquinol + NAD(+) + n H(+)(out). The enzyme catalyses a plastoquinone + NADPH + (n+1) H(+)(in) = a plastoquinol + NADP(+) + n H(+)(out). In terms of biological role, NDH-1 shuttles electrons from an unknown electron donor, via FMN and iron-sulfur (Fe-S) centers, to quinones in the respiratory and/or the photosynthetic chain. The immediate electron acceptor for the enzyme in this species is believed to be plastoquinone. Couples the redox reaction to proton translocation, and thus conserves the redox energy in a proton gradient. Cyanobacterial NDH-1 also plays a role in inorganic carbon-concentration. This Trichodesmium erythraeum (strain IMS101) protein is NAD(P)H-quinone oxidoreductase subunit O.